Reading from the N-terminus, the 652-residue chain is Aspartate--tRNA ligase, mitochondrial (652 aa).

A mitochondrion-targeting transit peptide spans 1–46; it reads MYLGSWLNRLGRGLSRPIGKTKQPIWGSLSRSLTLSSQRVPEFSSF. Thr218 carries the phosphothreonine modification. Ser241 is modified (phosphoserine). The interval 243–246 is aspartate; sequence QQFK. Arg265 is an L-aspartate binding site. Residues 265 to 267 and Glu534 contribute to the ATP site; that span reads RDE. Arg541 is a binding site for L-aspartate. Position 583–586 (583–586) interacts with ATP; the sequence is GLDR.

Belongs to the class-II aminoacyl-tRNA synthetase family. Type 1 subfamily. Homodimer.

The protein localises to the mitochondrion matrix. Its subcellular location is the mitochondrion membrane. The enzyme catalyses tRNA(Asp) + L-aspartate + ATP = L-aspartyl-tRNA(Asp) + AMP + diphosphate. In terms of biological role, catalyzes the attachment of aspartate to tRNA(Asp) in a two-step reaction: aspartate is first activated by ATP to form Asp-AMP and then transferred to the acceptor end of tRNA(Asp). In Rattus norvegicus (Rat), this protein is Aspartate--tRNA ligase, mitochondrial (Dars2).